Consider the following 191-residue polypeptide: Potassium-transporting ATPase KdpC subunit (191 aa).

A helical membrane pass occupies residues 6 to 26 (PALVLFILLTLLTGGVYPLLT).

The protein belongs to the KdpC family. As to quaternary structure, the system is composed of three essential subunits: KdpA, KdpB and KdpC.

Its subcellular location is the cell inner membrane. Functionally, part of the high-affinity ATP-driven potassium transport (or Kdp) system, which catalyzes the hydrolysis of ATP coupled with the electrogenic transport of potassium into the cytoplasm. This subunit acts as a catalytic chaperone that increases the ATP-binding affinity of the ATP-hydrolyzing subunit KdpB by the formation of a transient KdpB/KdpC/ATP ternary complex. This chain is Potassium-transporting ATPase KdpC subunit, found in Klebsiella pneumoniae subsp. pneumoniae (strain ATCC 700721 / MGH 78578).